Here is a 1493-residue protein sequence, read N- to C-terminus: ABC transporter C family member 7 (1493 aa).

The next 10 membrane-spanning stretches (helical) occupy residues 21–41, 70–90, 102–122, 140–160, 165–185, 309–329, 343–360, 423–443, 448–468, and 535–555; these read FPMF…GSCV, VVIC…LSCF, LMIL…SFYI, VWWV…IALY, LVSV…LFLC, ILLS…APYL, YSNQ…AKLV, WYMH…LILY, LGSI…IPLA, and SVLW…CMLL. Residues 309-590 form the ABC transmembrane type-1 1 domain; it reads ILLSTLFAFV…LPDTISMIVQ (282 aa). One can recognise an ABC transporter 1 domain in the interval 624-847; sequence VEVSNGAFSW…GTDFMELVGA (224 aa). 659 to 666 contributes to the ATP binding site; it reads GTVGSGKS. The interval 863–898 is disordered; sequence ASAQSTTSKESKVSNDEEKQEEDLPSPKGQLVQEEE. Phosphoserine is present on Ser888. Transmembrane regions (helical) follow at residues 915–935, 959–979, 1038–1055, 1059–1081, 1153–1173, and 1177–1197; these read LAYG…FQVL, GSTL…CILV, FSNL…IGVM, AWQV…QYYI, LSTV…EGVI, and FAGL…TLIW. Positions 922 to 1204 constitute an ABC transmembrane type-1 2 domain; it reads VPIILVVQIL…LIWTLCDLEN (283 aa). Residues 1241 to 1475 enclose the ABC transporter 2 domain; the sequence is ITICNLQVRY…KSSSFSKLVA (235 aa). 1275-1282 provides a ligand contact to ATP; it reads GRTGCGKS.

This sequence belongs to the ABC transporter superfamily. ABCC family. Conjugate transporter (TC 3.A.1.208) subfamily. In terms of tissue distribution, ubiquitous.

It localises to the membrane. The catalysed reaction is ATP + H2O + xenobioticSide 1 = ADP + phosphate + xenobioticSide 2.. In terms of biological role, pump for glutathione S-conjugates. This Arabidopsis thaliana (Mouse-ear cress) protein is ABC transporter C family member 7 (ABCC7).